We begin with the raw amino-acid sequence, 55 residues long: Large ribosomal subunit protein bL33 (55 aa).

The protein belongs to the bacterial ribosomal protein bL33 family.

This is Large ribosomal subunit protein bL33 from Acidothermus cellulolyticus (strain ATCC 43068 / DSM 8971 / 11B).